We begin with the raw amino-acid sequence, 396 residues long: NDP-glycosyltransferase YjiC (396 aa).

UDP is bound by residues N18, T234, V283, H298, and 302 to 306; that span reads NSTME.

It belongs to the UDP-glycosyltransferase family.

It carries out the reaction an NDP-glycose + an acceptor = a glycosylated acceptor + NDP.. Glycosyltransferase that can glycosylate a wide range of substrates, including various flavonoids (flavones, flavonols, flavanones, flavanols, chalcones), isoflavonoids and stilbenes, to produce multiple glycosylated products. It can accept diverse nucleotide diphosphate-D/L-sugars as donors, including ADP-, GDP-, CDP-, TDP- or UDP-alpha-D-glucose, and catalyzes O-, N-, or S-glycosylation. In vitro, catalyzes the glycosylation of, among others, apigenin, 3-hydroxyflavone, phloretin or resveratrol, resulting in multiple glucosylated products, along with mono-, di-, tri- and tetraglucosides. Can also catalyze the glycosylation of the macrolide epothilone A with diverse NDP-D/L-sugars, forming different epothilone A glycoside derivatives. The chain is NDP-glycosyltransferase YjiC from Bacillus licheniformis (strain ATCC 14580 / DSM 13 / JCM 2505 / CCUG 7422 / NBRC 12200 / NCIMB 9375 / NCTC 10341 / NRRL NRS-1264 / Gibson 46).